The chain runs to 156 residues: Myosin regulatory light chain, striated adductor muscle (156 aa).

Blocked amino end (Ala) is present on A1. 2 consecutive EF-hand domains span residues K15–T50 and D84–N119. Residues D28, D30, D32, and D39 each coordinate Ca(2+).

In terms of biological role, in molluscan muscle, calcium regulation is associated with myosin rather than with actin. Muscle myosin contains two types of light chains: the catalytic light chain, essential for ATPase activity, and the regulatory light chain, a calcium-binding protein responsible for Ca(2+) dependent binding and Ca(2+) dependent Mg-ATPase activity. The protein is Myosin regulatory light chain, striated adductor muscle of Mizuhopecten yessoensis (Japanese scallop).